Reading from the N-terminus, the 339-residue chain is tRNA N6-adenosine threonylcarbamoyltransferase (339 aa).

Fe cation is bound by residues His111 and His115. Residues 134 to 138 (LVSGG), Asp167, Gly180, and Asn272 contribute to the substrate site. Asp300 contributes to the Fe cation binding site.

It belongs to the KAE1 / TsaD family. The cofactor is Fe(2+).

The protein resides in the cytoplasm. The catalysed reaction is L-threonylcarbamoyladenylate + adenosine(37) in tRNA = N(6)-L-threonylcarbamoyladenosine(37) in tRNA + AMP + H(+). Required for the formation of a threonylcarbamoyl group on adenosine at position 37 (t(6)A37) in tRNAs that read codons beginning with adenine. Is involved in the transfer of the threonylcarbamoyl moiety of threonylcarbamoyl-AMP (TC-AMP) to the N6 group of A37, together with TsaE and TsaB. TsaD likely plays a direct catalytic role in this reaction. The polypeptide is tRNA N6-adenosine threonylcarbamoyltransferase (Sodalis glossinidius (strain morsitans)).